Reading from the N-terminus, the 515-residue chain is Phenylalanine--tRNA ligase beta subunit (515 aa).

A B5 domain is found at 263–334 (HEYVKIYVDE…IVMGYNQMPR (72 aa)). Positions 312, 318, 321, and 322 each coordinate Mg(2+).

It belongs to the phenylalanyl-tRNA synthetase beta subunit family. Type 2 subfamily. As to quaternary structure, tetramer of two alpha and two beta subunits. The cofactor is Mg(2+).

It localises to the cytoplasm. The enzyme catalyses tRNA(Phe) + L-phenylalanine + ATP = L-phenylalanyl-tRNA(Phe) + AMP + diphosphate + H(+). This chain is Phenylalanine--tRNA ligase beta subunit, found in Pyrobaculum aerophilum (strain ATCC 51768 / DSM 7523 / JCM 9630 / CIP 104966 / NBRC 100827 / IM2).